A 516-amino-acid chain; its full sequence is GMP synthase [glutamine-hydrolyzing] (516 aa).

The region spanning 8 to 198 (KILILDFGSQ…ALNICKCDAL (191 aa)) is the Glutamine amidotransferase type-1 domain. The active-site Nucleophile is the cysteine 84. Catalysis depends on residues histidine 172 and glutamate 174. Residues 199–391 (WNIENIIEND…LGLPYNMLYR (193 aa)) form the GMPS ATP-PPase domain. 226 to 232 (SGGVDSS) provides a ligand contact to ATP.

As to quaternary structure, homodimer.

It carries out the reaction XMP + L-glutamine + ATP + H2O = GMP + L-glutamate + AMP + diphosphate + 2 H(+). It participates in purine metabolism; GMP biosynthesis; GMP from XMP (L-Gln route): step 1/1. In terms of biological role, catalyzes the synthesis of GMP from XMP. In Francisella philomiragia subsp. philomiragia (strain ATCC 25017 / CCUG 19701 / FSC 153 / O#319-036), this protein is GMP synthase [glutamine-hydrolyzing].